We begin with the raw amino-acid sequence, 361 residues long: Mannose-1-phosphate guanyltransferase (361 aa).

It belongs to the transferase hexapeptide repeat family.

Its subcellular location is the cytoplasm. The catalysed reaction is alpha-D-mannose 1-phosphate + GTP + H(+) = GDP-alpha-D-mannose + diphosphate. It functions in the pathway nucleotide-sugar biosynthesis; GDP-alpha-D-mannose biosynthesis; GDP-alpha-D-mannose from alpha-D-mannose 1-phosphate (GTP route): step 1/1. In terms of biological role, involved in cell wall synthesis where it is required for glycosylation. Involved in cell cycle progression through cell-size checkpoint. This Eremothecium gossypii (strain ATCC 10895 / CBS 109.51 / FGSC 9923 / NRRL Y-1056) (Yeast) protein is Mannose-1-phosphate guanyltransferase (MPG1).